Here is a 370-residue protein sequence, read N- to C-terminus: Peptidyl-prolyl cis-trans isomerase D (370 aa).

Position 5 is a phosphoserine (Ser5). Residues 19–183 form the PPIase cyclophilin-type domain; that stretch reads FFDVDIGGER…KLCVIAECGE (165 aa). Lys171 carries the N6-acetyllysine modification. The interval 185 to 215 is chaperone activity; it reads KEGDDWGIFPKDGSGDSHPDFPEDADIDLKD. A Phosphoserine modification is found at Ser198. The interval 214-370 is interaction with HSP90AB1; sequence KDVDKILLIS…EKAVYAKMFA (157 aa). TPR repeat units follow at residues 223-256, 273-306, and 307-340; these read SEDLKNIGNTFFKSQNWEMAIKKYAKVLRYVDSS, LSCVLNIGACKLKMSNWQGAIDSCLEALEMDPSN, and TKALYRKAQGWQGLKEYDQALADLKKAQEIAPGD.

Belongs to the cyclophilin-type PPIase family. PPIase D subfamily. Identified in ESR1 or NR3C1/GCR steroid receptor-chaperone complexes. Found in HSP90 chaperone complexes with kinase clients LCK or EIF2AK1. Two monomers associate with one HSP90 homodimer. Interacts with HSP90AA1. Interacts with HSP90AB1; PPID and FKBP4 compete for binding to HSP90AB1 and the interaction is mutually exclusive with the PPID:HSPA8 interaction. Interacts with HSPA8; PPID and STIP1 but not FKBP4 compete for binding to HSPA8 and the interaction is mutually exclusive with the PPID:HSP90AB1 interaction. Interacts with S100A1 and S100A2; the interactions dissociate the PPID:HSP90AA1 interaction. Interacts with S100A6. Interacts with MYB, ILF2, XRCC6, RACK1 and RPS3. Interacts with cytoplasmic dynein 1 intermediate chain (DYNC1I1 or DYNC1I2).

It localises to the cytoplasm. The protein localises to the nucleus. It is found in the nucleolus. The protein resides in the nucleoplasm. It catalyses the reaction [protein]-peptidylproline (omega=180) = [protein]-peptidylproline (omega=0). Less sensitive to inhibition by cyclosporin A than is CYP-18. PPIase that catalyzes the cis-trans isomerization of proline imidic peptide bonds in oligopeptides and may therefore assist protein folding. Proposed to act as a co-chaperone in HSP90 complexes such as in unligated steroid receptors heterocomplexes. Different co-chaperones seem to compete for association with HSP90 thus establishing distinct HSP90-co-chaperone-receptor complexes with the potential to exert tissue-specific receptor activity control. May have a preference for estrogen receptor complexes and is not found in glucocorticoid receptor complexes. May be involved in cytoplasmic dynein-dependent movement of the receptor from the cytoplasm to the nucleus. May regulate MYB by inhibiting its DNA-binding activity. Involved in regulation of AHR signaling by promoting the formation of the AHR:ARNT dimer; the function is independent of HSP90 but requires the chaperone activity region. Involved in regulation of UV radiation-induced apoptosis. The protein is Peptidyl-prolyl cis-trans isomerase D of Mus musculus (Mouse).